The following is a 253-amino-acid chain: Homeobox protein EMX2 (253 aa).

Residues 155-214 (PKRIRTAFSPSQLLRLEHAFEKNHYVVGAERKQLAHSLSLTETQVKVWFQNRRTKFKRQK) constitute a DNA-binding region (homeobox). The tract at residues 213-253 (QKLEEEGSDSQQKKKGTHHINRWRIATKQASPEEIDVTSDD) is disordered. The span at 225–234 (KKKGTHHINR) shows a compositional bias: basic residues.

The protein belongs to the EMX homeobox family. In terms of assembly, interacts with translation initiation factor EIF4E.

It is found in the nucleus. The protein resides in the cell projection. It localises to the axon. In terms of biological role, transcription factor, which in cooperation with EMX1, acts to generate the boundary between the roof and archipallium in the developing brain. May function in combination with OTX1/2 to specify cell fates in the developing central nervous system. In the inner ear, it controls the distribution of GPR156 at hair cell boundaries, and regulates the organization of stereociliary bundles in opposite orientations across the line of polarity reversal (LPR). This chain is Homeobox protein EMX2 (EMX2), found in Bos taurus (Bovine).